The primary structure comprises 116 residues: Thioredoxin H-type (116 aa).

Residues 2–115 enclose the Thioredoxin domain; the sequence is AEEAQVIACH…HKIAVHAPIT (114 aa). Residues cysteine 39 and cysteine 42 each act as nucleophile in the active site. Cysteine 39 and cysteine 42 form a disulfide bridge.

This sequence belongs to the thioredoxin family. Plant H-type subfamily.

Its subcellular location is the cytoplasm. In terms of biological role, participates in various redox reactions through the reversible oxidation of the active center dithiol to a disulfide. The H form is known to activate a number of cytosolic enzymes. This is Thioredoxin H-type from Fagopyrum esculentum (Common buckwheat).